We begin with the raw amino-acid sequence, 305 residues long: Glutaminase (305 aa).

The substrate site is built by Ser61, Asn113, Glu158, Asn165, Tyr189, Tyr241, and Val259.

Belongs to the glutaminase family. As to quaternary structure, homotetramer.

It carries out the reaction L-glutamine + H2O = L-glutamate + NH4(+). The protein is Glutaminase of Clostridium botulinum (strain 657 / Type Ba4).